Reading from the N-terminus, the 1017-residue chain is Stereoselective keto-reductase af490 (1017 aa).

Residues 6-138 (NELSGSQVPG…GRLRMTFAGH (133 aa)) are N-terminal hotdog fold. The PKS/mFAS DH domain maps to 6–311 (NELSGSQVPG…MSPIAPSTEK (306 aa)). A dehydratase (DH) region spans residues 8–306 (LSGSQVPGAT…LEGLTMSPIA (299 aa)). The interval 153–311 (LRPVSISPFY…MSPIAPSTEK (159 aa)) is C-terminal hotdog fold. Residues 532-720 (QIRFLRAPFD…VQGGRLLIPR (189 aa)) are ketoreductase (KR).

The enzyme catalyses fumagillol + NADP(+) = 5-dehydrofumagillol + NADPH + H(+). Its pathway is secondary metabolite biosynthesis; terpenoid biosynthesis. Stereoselective keto-reductase; part of the gene cluster that mediates the biosynthesis of fumagillin, a meroterpenoid that has numerous biological activities including irreversible inhibition of human type 2 methionine aminopeptidase (METAP2). Within the pathway, the keto-reductase af490 acts as a 5-dehydrofumagillol 5-reductase that stereoselectively reduces 5-keto-fumagillol to 5R-hydroxy-seco-sesquiterpene. The pathway begins with the conversion of farnesyl pyrophosphate (FPP) to beta-trans-bergamotene by the membrane-bound beta-trans-bergamotene synthase af520. The multifunctional cytochrome P450 monooxygenase af510 then converts beta-trans-bergamotene into 5-keto-demethoxyfumagillol via several oxydation steps. 5-keto-demethoxyfumagillol is then subjected to successive C-6 hydroxylation and O-methylation by the dioxygenase af480 and O-methyltransferase af390-400, respectively, to yield 5-keto-fumagillol, which is then stereoselectively reduced by the keto-reductase af490 to 5R-hydroxy-seco-sesquiterpene. The next step is the polyketide transferase af380-catalyzed transfer of a dodecapentaenoyl group synthesized by the polyketide synthase af370 onto 5R-hydroxy-seco-sesquiterpene which leads to the production of prefumagillin. Finally, oxidative cleavage by the monooxygenase af470 converts prefumagillin to fumagillin. The sequence is that of Stereoselective keto-reductase af490 from Aspergillus fumigatus (strain ATCC MYA-4609 / CBS 101355 / FGSC A1100 / Af293) (Neosartorya fumigata).